Reading from the N-terminus, the 305-residue chain is Coenzyme PQQ synthesis protein B (305 aa).

The protein belongs to the PqqB family.

It participates in cofactor biosynthesis; pyrroloquinoline quinone biosynthesis. May be involved in the transport of PQQ or its precursor to the periplasm. The sequence is that of Coenzyme PQQ synthesis protein B from Cupriavidus taiwanensis (strain DSM 17343 / BCRC 17206 / CCUG 44338 / CIP 107171 / LMG 19424 / R1) (Ralstonia taiwanensis (strain LMG 19424)).